The following is a 438-amino-acid chain: Trigger factor (438 aa).

Residues 162-247 form the PPIase FKBP-type domain; the sequence is GDRVNINYQG…LNKVEAPKLP (86 aa).

Belongs to the FKBP-type PPIase family. Tig subfamily.

Its subcellular location is the cytoplasm. It catalyses the reaction [protein]-peptidylproline (omega=180) = [protein]-peptidylproline (omega=0). Its function is as follows. Involved in protein export. Acts as a chaperone by maintaining the newly synthesized protein in an open conformation. Functions as a peptidyl-prolyl cis-trans isomerase. The protein is Trigger factor of Nitrosomonas eutropha (strain DSM 101675 / C91 / Nm57).